Consider the following 899-residue polypeptide: RNA-binding motif protein 25 (899 aa).

Polar residues predominate over residues 1–20; sequence MADESSSPATGDPNSQKPES. A disordered region spans residues 1-112; that stretch reads MADESSSPAT…SMPQYQPQPG (112 aa). Over residues 26–63 the composition is skewed to pro residues; that stretch reads IPNPNPNPSLTPPPPQQHSQPPVAPLVPPGPPYAPPAQ. The RRM domain occupies 204 to 281; that stretch reads TTIYIGKIAT…QELLVNVNQA (78 aa). Disordered regions lie at residues 298-572 and 611-778; these read KKAK…EQNL and GESA…KESG. Basic and acidic residues-rich tracts occupy residues 317-340 and 354-372; these read EQDK…KENI and EADR…ERLK. Residues 375–384 show a composition bias toward pro residues; that stretch reads PLPPPPPPPA. Residues 430 to 505 show a composition bias toward basic and acidic residues; the sequence is WSKRNDRRSR…QYEKEKEKEK (76 aa). The stretch at 434-578 forms a coiled coil; it reads NDRRSRERGE…EQNLQQQQLD (145 aa). A compositionally biased stretch (acidic residues) spans 515-524; that stretch reads YEEEEEEDDD. Positions 526–533 match the Nuclear localization signal 1 motif; it reads SRRRWHRA. Residues 533–568 show a composition bias toward basic and acidic residues; it reads AALDERRRRQLREKEDDLADRLKEEEEVAEAKRSAE. Polar residues predominate over residues 626–640; sequence GSGNESMAIDNNSGS. 2 stretches are compositionally biased toward basic and acidic residues: residues 723–733 and 740–778; these read PKEETIETEKQ and DKAS…KESG. The Nuclear localization signal 2 motif lies at 735-742; that stretch reads SRRSHDKA. The PWI domain maps to 802 to 899; sequence EDLFSYEINW…EAGVPVKSKA (98 aa).

Specifically associates with functional splicing complexes. Associates with exon junction complex (EJC) proteins. In terms of processing, phosphorylated; the phosphorylation level is repressed by abscisic acid (ABA).

Its subcellular location is the nucleus. RNA-binding protein that acts as a regulator of alternative pre-mRNA splicing. Negative regulator of responses to abscisic acid (ABA), including in early development. This chain is RNA-binding motif protein 25, found in Arabidopsis thaliana (Mouse-ear cress).